Here is a 316-residue protein sequence, read N- to C-terminus: Transaldolase (316 aa).

The Schiff-base intermediate with substrate role is filled by lysine 127.

Belongs to the transaldolase family. Type 2 subfamily.

Its subcellular location is the cytoplasm. It catalyses the reaction D-sedoheptulose 7-phosphate + D-glyceraldehyde 3-phosphate = D-erythrose 4-phosphate + beta-D-fructose 6-phosphate. It functions in the pathway carbohydrate degradation; pentose phosphate pathway; D-glyceraldehyde 3-phosphate and beta-D-fructose 6-phosphate from D-ribose 5-phosphate and D-xylulose 5-phosphate (non-oxidative stage): step 2/3. Functionally, transaldolase is important for the balance of metabolites in the pentose-phosphate pathway. This is Transaldolase (tal) from Helicobacter pylori (strain ATCC 700392 / 26695) (Campylobacter pylori).